Reading from the N-terminus, the 377-residue chain is D-alanine--D-alanine ligase (377 aa).

In terms of domain architecture, ATP-grasp spans 140 to 349; it reads KELLTVNGIR…NAKLVDMLID (210 aa). ATP is bound at residue 170–225; that stretch reads VAELGNIVFVKAANQGSSVGISRVTNAEEYTEALSDSFQYDYKVLIEEAVNGAREL. Mg(2+) is bound by residues D303, E316, and N318.

It belongs to the D-alanine--D-alanine ligase family. Mg(2+) is required as a cofactor. It depends on Mn(2+) as a cofactor.

Its subcellular location is the cytoplasm. The catalysed reaction is 2 D-alanine + ATP = D-alanyl-D-alanine + ADP + phosphate + H(+). It functions in the pathway cell wall biogenesis; peptidoglycan biosynthesis. Functionally, cell wall formation. This chain is D-alanine--D-alanine ligase, found in Leuconostoc mesenteroides subsp. mesenteroides (strain ATCC 8293 / DSM 20343 / BCRC 11652 / CCM 1803 / JCM 6124 / NCDO 523 / NBRC 100496 / NCIMB 8023 / NCTC 12954 / NRRL B-1118 / 37Y).